A 230-amino-acid polypeptide reads, in one-letter code: Urease accessory protein UreE (230 aa).

The segment covering 200-210 (HAIHSHGTGHT) has biased composition (basic residues). The tract at residues 200–230 (HAIHSHGTGHTHSHDHDHSHSHGDHDHDHKH) is disordered. Residues 211–230 (HSHDHDHSHSHGDHDHDHKH) are compositionally biased toward basic and acidic residues.

The protein belongs to the UreE family.

The protein localises to the cytoplasm. Involved in urease metallocenter assembly. Binds nickel. Probably functions as a nickel donor during metallocenter assembly. The chain is Urease accessory protein UreE from Yersinia enterocolitica serotype O:8 / biotype 1B (strain NCTC 13174 / 8081).